The following is a 207-amino-acid chain: Glutathione S-transferase 4 (207 aa).

Positions 2-79 constitute a GST N-terminal domain; sequence PNYKLLYFDA…YLARKFGLAG (78 aa). Glutathione contacts are provided by residues tyrosine 8, tryptophan 39, lysine 43, 49–51, and 63–64; these read GQL and QS. In terms of domain architecture, GST C-terminal spans 81 to 207; that stretch reads TAEEEAYADS…YVATRKDSIV (127 aa).

This sequence belongs to the GST superfamily. Sigma family.

It carries out the reaction RX + glutathione = an S-substituted glutathione + a halide anion + H(+). Its function is as follows. Conjugation of reduced glutathione to a wide number of exogenous and endogenous hydrophobic electrophiles. May play a role in the detoxification of reactive oxygen species produced during pathogenic bacterial infection. The polypeptide is Glutathione S-transferase 4 (Caenorhabditis elegans).